The chain runs to 159 residues: Transcription elongation factor GreA (159 aa).

Positions 3 to 37 form a coiled coil; the sequence is TNKEVVLTYEGLQKLEQELENLKTVKRREVAERIK.

This sequence belongs to the GreA/GreB family.

Its function is as follows. Necessary for efficient RNA polymerase transcription elongation past template-encoded arresting sites. The arresting sites in DNA have the property of trapping a certain fraction of elongating RNA polymerases that pass through, resulting in locked ternary complexes. Cleavage of the nascent transcript by cleavage factors such as GreA or GreB allows the resumption of elongation from the new 3'terminus. GreA releases sequences of 2 to 3 nucleotides. The chain is Transcription elongation factor GreA from Acetivibrio thermocellus (strain ATCC 27405 / DSM 1237 / JCM 9322 / NBRC 103400 / NCIMB 10682 / NRRL B-4536 / VPI 7372) (Clostridium thermocellum).